The sequence spans 862 residues: Chaperone protein ClpB 1 (862 aa).

Residues 5 to 147 (AEQFTEQAWA…KEAITAVRGN (143 aa)) form the Clp R domain. Repeat stretches follow at residues 8 to 72 (FTEQ…LQRL) and 84 to 147 (LGRS…VRGN). The tract at residues 160–341 (ESLAKYGRDL…RRFQQVLVDQ (182 aa)) is NBD1. 207-214 (GEPGVGKT) is a binding site for ATP. The linker stretch occupies residues 342-550 (PTVPDTISIL…IAEVIAKWTG (209 aa)). Residues 392-526 (IDLVDESAAR…QEDLLEDEDG (135 aa)) adopt a coiled-coil conformation. The segment at 560–771 (EMEKLLQLED…RLDDQIIFRS (212 aa)) is NBD2. Residue 610–617 (GPTGVGKT) coordinates ATP. Positions 772–862 (LEKEELRRIV…DAGDDKLSIS (91 aa)) are C-terminal.

Belongs to the ClpA/ClpB family. In terms of assembly, homohexamer. The oligomerization is ATP-dependent.

Its subcellular location is the cytoplasm. Functionally, part of a stress-induced multi-chaperone system, it is involved in the recovery of the cell from heat-induced damage, in cooperation with DnaK, DnaJ and GrpE. Acts before DnaK, in the processing of protein aggregates. Protein binding stimulates the ATPase activity; ATP hydrolysis unfolds the denatured protein aggregates, which probably helps expose new hydrophobic binding sites on the surface of ClpB-bound aggregates, contributing to the solubilization and refolding of denatured protein aggregates by DnaK. In Parasynechococcus marenigrum (strain WH8102), this protein is Chaperone protein ClpB 1 (clpB1).